The primary structure comprises 513 residues: t-SNARE domain-containing protein 1 (513 aa).

2 disordered regions span residues 1-23 (MSYGSIARGGGLGSRGPFGGPSR) and 49-128 (ESKL…KPNF). Positions 7 to 19 (ARGGGLGSRGPFG) are enriched in gly residues. Ser378 carries the post-translational modification Phosphoserine. The 63-residue stretch at 416-478 (LEAIRLREEA…EAARQLLAGA (63 aa)) folds into the t-SNARE coiled-coil homology domain. Residues 491–511 (CFLSAGVTALLVIIIIIATSV) form a helical membrane-spanning segment.

The protein resides in the membrane. The chain is t-SNARE domain-containing protein 1 (TSNARE1) from Homo sapiens (Human).